We begin with the raw amino-acid sequence, 425 residues long: Protein CLP1 homolog (425 aa).

ATP-binding positions include glutamate 18, lysine 59, and 121–126 (DVGKST).

This sequence belongs to the Clp1 family. Clp1 subfamily.

It localises to the nucleus. Required for endonucleolytic cleavage during polyadenylation-dependent pre-mRNA 3'-end formation. The sequence is that of Protein CLP1 homolog (cbc) from Drosophila grimshawi (Hawaiian fruit fly).